The primary structure comprises 898 residues: Methionine--tRNA ligase, cytoplasmic (898 aa).

The GST C-terminal domain maps to 74–198 (GWEQDDLTNQ…VLKQQGVLAL (125 aa)). The 'HIGH' region signature appears at 273-283 (PYVNNVPHLGN). The short motif at 593 to 597 (KFSKS) is the 'KMSKS' region element. An ATP-binding site is contributed by K596. S825 carries the phosphoserine modification. T833 is subject to Phosphothreonine. The 57-residue stretch at 839–895 (QIQALTEEVTKQGNIVRELKAQKADKNQIAAEVAKLLDLKKQLALAEGKPLETSKGK) folds into the WHEP-TRS domain.

It belongs to the class-I aminoacyl-tRNA synthetase family. In terms of assembly, monomer. Part of a multisubunit complex that groups tRNA ligases for Arg (RARS1), Asp (DARS1), Gln (QARS1), Ile (IARS1), Leu (LARS1), Lys (KARS1), Met (MARS1) the bifunctional ligase for Glu and Pro (EPRS1) and the auxiliary subunits AIMP1/p43, AIMP2/p38 and EEF1E1/p18. Forms a linear complex that contains MARS1, EEF1E1, EPRS1 and AIMP2 that is at the core of the multisubunit complex.

The protein localises to the cytoplasm. It localises to the cytosol. The protein resides in the nucleus. Its subcellular location is the nucleolus. The enzyme catalyses tRNA(Met) + L-methionine + ATP = L-methionyl-tRNA(Met) + AMP + diphosphate. Catalyzes the specific attachment of an amino acid to its cognate tRNA in a 2 step reaction: the amino acid (AA) is first activated by ATP to form AA-AMP and then transferred to the acceptor end of the tRNA. Plays a role in the synthesis of ribosomal RNA in the nucleolus. This Bos taurus (Bovine) protein is Methionine--tRNA ligase, cytoplasmic (MARS1).